Here is a 202-residue protein sequence, read N- to C-terminus: Superoxide dismutase [Mn], mitochondrial (202 aa).

A mitochondrion-targeting transit peptide spans 1–5 (HGRGM). His-31 contacts Mn(2+). A 3'-nitrotyrosine modification is found at Tyr-39. Lys-49 carries the N6-acetyllysine; alternate modification. An N6-succinyllysine; alternate modification is found at Lys-49. Residue His-79 participates in Mn(2+) binding. An N6-acetyllysine modification is found at Lys-95. N6-acetyllysine; alternate occurs at positions 103 and 111. 2 positions are modified to N6-succinyllysine; alternate: Lys-103 and Lys-111. Residues Asp-164 and His-168 each coordinate Mn(2+). At Lys-183 the chain carries N6-acetyllysine.

This sequence belongs to the iron/manganese superoxide dismutase family. Homotetramer. Mn(2+) serves as cofactor. Nitrated under oxidative stress. Nitration coupled with oxidation inhibits the catalytic activity. Post-translationally, acetylation at Lys-122 decreases enzymatic activity. Deacetylated by SIRT3 upon exposure to ionizing radiations or after long fasting. In terms of processing, polyubiquitinated; leading to proteasomal degradation. Deubiquitinated by USP36 which increases protein stability.

It localises to the mitochondrion matrix. The catalysed reaction is 2 superoxide + 2 H(+) = H2O2 + O2. Destroys superoxide anion radicals which are normally produced within the cells and which are toxic to biological systems. This chain is Superoxide dismutase [Mn], mitochondrial (SOD2), found in Oryctolagus cuniculus (Rabbit).